Here is a 469-residue protein sequence, read N- to C-terminus: 3-isopropylmalate dehydratase large subunit (469 aa).

Residues Cys350, Cys410, and Cys413 each contribute to the [4Fe-4S] cluster site.

The protein belongs to the aconitase/IPM isomerase family. LeuC type 1 subfamily. Heterodimer of LeuC and LeuD. [4Fe-4S] cluster serves as cofactor.

It carries out the reaction (2R,3S)-3-isopropylmalate = (2S)-2-isopropylmalate. It functions in the pathway amino-acid biosynthesis; L-leucine biosynthesis; L-leucine from 3-methyl-2-oxobutanoate: step 2/4. Its function is as follows. Catalyzes the isomerization between 2-isopropylmalate and 3-isopropylmalate, via the formation of 2-isopropylmaleate. This is 3-isopropylmalate dehydratase large subunit from Rhodopseudomonas palustris (strain ATCC BAA-98 / CGA009).